Reading from the N-terminus, the 139-residue chain is Small ribosomal subunit protein bS6 (139 aa).

Basic and acidic residues predominate over residues 114–133 (KKEPREPRAPREPRVEKVDE). The interval 114–139 (KKEPREPRAPREPRVEKVDEQTFTEE) is disordered.

Belongs to the bacterial ribosomal protein bS6 family.

Functionally, binds together with bS18 to 16S ribosomal RNA. This Campylobacter concisus (strain 13826) protein is Small ribosomal subunit protein bS6.